Consider the following 479-residue polypeptide: Putative F-box/LRR-repeat protein At1g56400 (479 aa).

The F-box domain maps to 12–60 (QDRLSNLPDVLLIMIISCLSFKECIRTSVLAKRWRYLCRETRNISFKET). LRR repeat units lie at residues 99-129 (YFSI…VLDF), 139-167 (CASR…KIYS), 186-211 (IGWI…SINY), 228-254 (VFES…KYSG), 287-312 (RTKL…SVCP), 342-367 (LHVM…TFDI), and 419-446 (LKFL…ELYM).

The protein is Putative F-box/LRR-repeat protein At1g56400 of Arabidopsis thaliana (Mouse-ear cress).